Reading from the N-terminus, the 63-residue chain is Prokaryotic ubiquitin-like protein Pup (63 aa).

A disordered region spans residues 1–35 (MSGQQSQINAGGGNGQGGDTPEFDAGQVSINSAGT). The tract at residues 19 to 57 (DTPEFDAGQVSINSAGTDDLLDEIDGLLESNAEEFVRSY) is ARC ATPase binding. E63 participates in a covalent cross-link: Isoglutamyl lysine isopeptide (Glu-Lys) (interchain with K-? in acceptor proteins).

The protein belongs to the prokaryotic ubiquitin-like protein family. Strongly interacts with the proteasome-associated ATPase ARC through a hydrophobic interface; the interacting region of Pup lies in its C-terminal half. There is one Pup binding site per ARC hexamer ring.

It functions in the pathway protein degradation; proteasomal Pup-dependent pathway. Its function is as follows. Protein modifier that is covalently attached to lysine residues of substrate proteins, thereby targeting them for proteasomal degradation. The tagging system is termed pupylation. This is Prokaryotic ubiquitin-like protein Pup from Corynebacterium aurimucosum (strain ATCC 700975 / DSM 44827 / CIP 107346 / CN-1) (Corynebacterium nigricans).